We begin with the raw amino-acid sequence, 408 residues long: uncharacterized protein (408 aa).

This is an uncharacterized protein from Methanocaldococcus jannaschii (strain ATCC 43067 / DSM 2661 / JAL-1 / JCM 10045 / NBRC 100440) (Methanococcus jannaschii).